We begin with the raw amino-acid sequence, 177 residues long: Protein TERMINAL FLOWER 1 (177 aa).

The protein belongs to the phosphatidylethanolamine-binding protein family. As to expression, expressed below the apical dome of inflorescence and coflorescence meristems, and in inflorescence stem.

It is found in the cytoplasm. In terms of biological role, controls inflorescence meristem identity and is required for maintenance of an indeterminate inflorescence. Prevents the expression of 'APETALA1' and 'LEAFY'. Also plays a role in the regulation of the time of flowering in the long-day flowering pathway. May form complexes with phosphorylated ligands by interfering with kinases and their effectors. The polypeptide is Protein TERMINAL FLOWER 1 (TFL1) (Arabidopsis thaliana (Mouse-ear cress)).